Here is a 388-residue protein sequence, read N- to C-terminus: MKFVDEAVIRVEAGDGGSGCVSFRREKYVPDGGPDGGDGGDGGSVYLQADENFNTLIEFRFERFHMAERGENGRGRDCTGHSGKDLILKVPVGTRAIDHDTEEVLGDLTTHGQKLLVAKGGFHGLGNTRFKSSTNRAPRQKTLGTPGEVRSLKLELLLLADVGLLGMPNAGKSTFIRAVSRATPKVADYPFTTLVPNLGVVNPRPGQSFVIADIPGLIEGAAEGAGLGIRFLKHLERCRILLHIIDIEPIDGTDPVESARAIVGELEKYSPKLASKPRWLVFNKTDLLLEEELQEKVERIVKELEWEGDVYTISAYNREGTKELALKLLDYIASLPPEDNVVNPDDEVEFKWDNYHQANLDSVNEDYDDDFDDDFDDDDYDVEVIYQR.

In terms of domain architecture, Obg spans Met-1–Leu-159. One can recognise an OBG-type G domain in the interval Ala-160–Ala-333. GTP-binding positions include Gly-166–Ser-173, Phe-191–Val-195, Asp-213–Gly-216, Asn-283–Asp-286, and Ser-314–Tyr-316. Mg(2+) contacts are provided by Ser-173 and Thr-193.

The protein belongs to the TRAFAC class OBG-HflX-like GTPase superfamily. OBG GTPase family. As to quaternary structure, monomer. It depends on Mg(2+) as a cofactor.

It is found in the cytoplasm. An essential GTPase which binds GTP, GDP and possibly (p)ppGpp with moderate affinity, with high nucleotide exchange rates and a fairly low GTP hydrolysis rate. Plays a role in control of the cell cycle, stress response, ribosome biogenesis and in those bacteria that undergo differentiation, in morphogenesis control. This chain is GTPase Obg, found in Shewanella putrefaciens (strain CN-32 / ATCC BAA-453).